Here is a 237-residue protein sequence, read N- to C-terminus: Proteasome subunit alpha type-5-B (237 aa).

At Met1 the chain carries N-acetylmethionine. Glycyl lysine isopeptide (Lys-Gly) (interchain with G-Cter in ubiquitin) cross-links involve residues Lys43, Lys66, and Lys185.

Belongs to the peptidase T1A family. As to quaternary structure, component of the 20S core complex of the 26S proteasome. The 26S proteasome is composed of a core protease (CP), known as the 20S proteasome, capped at one or both ends by the 19S regulatory particle (RP/PA700). The 20S proteasome core is composed of 28 subunits that are arranged in four stacked rings, resulting in a barrel-shaped structure. The two end rings are each formed by seven alpha subunits, and the two central rings are each formed by seven beta subunits. The catalytic chamber with the active sites is on the inside of the barrel.

It localises to the cytoplasm. It is found in the nucleus. The proteasome is a multicatalytic proteinase complex which is characterized by its ability to cleave peptides with Arg, Phe, Tyr, Leu, and Glu adjacent to the leaving group at neutral or slightly basic pH. The proteasome has an ATP-dependent proteolytic activity. In Arabidopsis thaliana (Mouse-ear cress), this protein is Proteasome subunit alpha type-5-B (PAE2).